We begin with the raw amino-acid sequence, 210 residues long: Large ribosomal subunit protein uL3 (210 aa).

Residues 122–155 (NQKRNNFGRGPMSHGSKNHRAPGSIGAGTTPGRV) are disordered.

It belongs to the universal ribosomal protein uL3 family. As to quaternary structure, part of the 50S ribosomal subunit. Forms a cluster with proteins L14 and L19.

Its function is as follows. One of the primary rRNA binding proteins, it binds directly near the 3'-end of the 23S rRNA, where it nucleates assembly of the 50S subunit. In Nostoc punctiforme (strain ATCC 29133 / PCC 73102), this protein is Large ribosomal subunit protein uL3.